A 399-amino-acid chain; its full sequence is Glycerate 2-kinase (399 aa).

Lys48 contributes to the substrate binding site.

Belongs to the glycerate kinase type-1 family. As to quaternary structure, homodimer. It depends on Mg(2+) as a cofactor. Requires Ni(2+) as cofactor. Mn(2+) serves as cofactor. The cofactor is Co(2+). Ca(2+) is required as a cofactor. It depends on Zn(2+) as a cofactor. Requires Sr(2+) as cofactor.

It carries out the reaction (R)-glycerate + ATP = (2R)-2-phosphoglycerate + ADP + H(+). In terms of biological role, catalyzes the ATP-dependent phosphorylation of D-glycerate to 2-phosphoglycerate. It can also utilize GTP, CTP, UTP, ADP, AMP or pyrophosphate as phosphate donor. The chain is Glycerate 2-kinase (gck) from Sulfurisphaera tokodaii (strain DSM 16993 / JCM 10545 / NBRC 100140 / 7) (Sulfolobus tokodaii).